The chain runs to 89 residues: Small ribosomal subunit protein uS15 (89 aa).

The protein belongs to the universal ribosomal protein uS15 family. Part of the 30S ribosomal subunit. Forms a bridge to the 50S subunit in the 70S ribosome, contacting the 23S rRNA.

Its function is as follows. One of the primary rRNA binding proteins, it binds directly to 16S rRNA where it helps nucleate assembly of the platform of the 30S subunit by binding and bridging several RNA helices of the 16S rRNA. Forms an intersubunit bridge (bridge B4) with the 23S rRNA of the 50S subunit in the ribosome. The polypeptide is Small ribosomal subunit protein uS15 (Desulforudis audaxviator (strain MP104C)).